Here is a 119-residue protein sequence, read N- to C-terminus: MTTRQICTLPRQCKLRKADEFRAVLRNRIVFESLSLRLYVKPIDVDYARIGLIVAKRVERKAVRRNRIKRLIREAFRRHRQMLMGLDCVMQLRHPVELLDSTRIYQEAVMLFNKAARQL.

The protein belongs to the RnpA family. Consists of a catalytic RNA component (M1 or rnpB) and a protein subunit.

It catalyses the reaction Endonucleolytic cleavage of RNA, removing 5'-extranucleotides from tRNA precursor.. Functionally, RNaseP catalyzes the removal of the 5'-leader sequence from pre-tRNA to produce the mature 5'-terminus. It can also cleave other RNA substrates such as 4.5S RNA. The protein component plays an auxiliary but essential role in vivo by binding to the 5'-leader sequence and broadening the substrate specificity of the ribozyme. In Nitrosomonas europaea (strain ATCC 19718 / CIP 103999 / KCTC 2705 / NBRC 14298), this protein is Ribonuclease P protein component.